The sequence spans 2338 residues: Proto-oncogene tyrosine-protein kinase ROS (2338 aa).

Residues 1–27 (MKRIRWLTPKPATFVVLGCVWISVAQG) form the signal peptide. The Extracellular segment spans residues 28–1853 (TILSSCLTSC…EDGFWITETS (1826 aa)). N-linked (GlcNAc...) asparagine glycosylation is found at N52 and N77. Fibronectin type-III domains are found at residues 110–205 (LPTA…VPET) and 206–294 (APFI…PSPA). N-linked (GlcNAc...) asparagine glycosylation is found at N333, N361, N480, N623, N934, and N1010. In terms of domain architecture, Fibronectin type-III 3 spans 566 to 666 (LPGHPQEVSV…EPSVGTTLVP (101 aa)). Fibronectin type-III domains follow at residues 942-1037 (IPDS…SVPS) and 1038-1145 (APEN…TSEI). N-linked (GlcNAc...) asparagine glycosylation occurs at N1298. Fibronectin type-III domains lie at 1440 to 1548 (VASN…TKSG), 1549 to 1648 (VPGA…VNMF), 1650 to 1743 (TPEK…TKAG), and 1744 to 1845 (VPSK…LVED). An N-linked (GlcNAc...) asparagine glycan is attached at N1675. A helical membrane pass occupies residues 1854–1874 (FILTIIVGIFLVATVPLTFVW). At 1875–2338 (HRSLKNHKAT…AHSGHGDVSE (464 aa)) the chain is on the cytoplasmic side. In terms of domain architecture, Protein kinase spans 1937-2210 (LSLRLLLGSG…YNIQDQLQLF (274 aa)). ATP contacts are provided by residues 1943–1951 (LGSGAFGEV) and K1972. The Proton acceptor role is filled by D2071. Y2266 bears the Phosphotyrosine; by autocatalysis mark. Residues 2277–2314 (EDRYEGPLGSKESGLHDLKKDERQPADKDFCQQPQVAY) are disordered. Residues 2289-2306 (SGLHDLKKDERQPADKDF) show a composition bias toward basic and acidic residues. Position 2325 is a phosphotyrosine; by autocatalysis (Y2325).

The protein belongs to the protein kinase superfamily. Tyr protein kinase family. Insulin receptor subfamily. In terms of assembly, interacts with PTPN11; may activate the PI3 kinase-mTOR signaling pathway. Interacts with VAV3; constitutive interaction mediating VAV3 phosphorylation. Interacts with PTPN6 (via SH2 1 domain); the interaction is direct and promotes ROS1 dephosphorylation. In terms of processing, phosphorylated. Probably autophosphorylates. Phosphorylation at Tyr-2266 is required for the interaction with PTPN6 that mediates ROS1 dephosphorylation. Phosphorylation at Tyr-2266 stimulates the kinase activity and the activation of the ERK1 signaling cascade. Phosphorylation at Tyr-2266 and/or Tyr-2325 recruits PTPN11. In terms of tissue distribution, expressed in heart, lung, kidney and testis.

The protein localises to the cell membrane. It catalyses the reaction L-tyrosyl-[protein] + ATP = O-phospho-L-tyrosyl-[protein] + ADP + H(+). Its activity is regulated as follows. Inhibited by dephosphorylation by PTPN6. Functionally, orphan receptor tyrosine kinase (RTK) that plays a role in epithelial cell differentiation and regionalization of the proximal epididymal epithelium. NELL2 is an endogenous ligand for ROS1. Upon endogenous stimulation by NELL2, ROS1 activates the intracellular signaling pathway and triggers epididymal epithelial differentiation and subsequent sperm maturation. May activate several downstream signaling pathways related to cell differentiation, proliferation, growth and survival including the PI3 kinase-mTOR signaling pathway. Mediates the phosphorylation of PTPN11, an activator of this pathway. May also phosphorylate and activate the transcription factor STAT3 to control anchorage-independent cell growth. Mediates the phosphorylation and the activation of VAV3, a guanine nucleotide exchange factor regulating cell morphology. May activate other downstream signaling proteins including AKT1, MAPK1, MAPK3, IRS1 and PLCG2. This is Proto-oncogene tyrosine-protein kinase ROS (Ros1) from Rattus norvegicus (Rat).